A 331-amino-acid chain; its full sequence is Protein RecA (331 aa).

ATP is bound at residue 66–73 (GPESSGKT).

The protein belongs to the RecA family.

The protein resides in the cytoplasm. Functionally, can catalyze the hydrolysis of ATP in the presence of single-stranded DNA, the ATP-dependent uptake of single-stranded DNA by duplex DNA, and the ATP-dependent hybridization of homologous single-stranded DNAs. It interacts with LexA causing its activation and leading to its autocatalytic cleavage. This is Protein RecA from Lactobacillus delbrueckii subsp. bulgaricus (strain ATCC 11842 / DSM 20081 / BCRC 10696 / JCM 1002 / NBRC 13953 / NCIMB 11778 / NCTC 12712 / WDCM 00102 / Lb 14).